Reading from the N-terminus, the 447-residue chain is Ribulose bisphosphate carboxylase large chain (447 aa).

2 residues coordinate substrate: Asn89 and Thr139. Lys141 serves as the catalytic Proton acceptor. Lys143 provides a ligand contact to substrate. Mg(2+) contacts are provided by Lys167, Asp169, and Glu170. Lys167 carries the post-translational modification N6-carboxylysine. The active-site Proton acceptor is the His260. Arg261, His293, and Ser345 together coordinate substrate.

It belongs to the RuBisCO large chain family. Type I subfamily. In terms of assembly, heterohexadecamer of 8 large chains and 8 small chains; disulfide-linked. The disulfide link is formed within the large subunit homodimers. It depends on Mg(2+) as a cofactor. Post-translationally, the disulfide bond which can form in the large chain dimeric partners within the hexadecamer appears to be associated with oxidative stress and protein turnover.

The protein localises to the plastid. Its subcellular location is the chloroplast. It carries out the reaction 2 (2R)-3-phosphoglycerate + 2 H(+) = D-ribulose 1,5-bisphosphate + CO2 + H2O. The enzyme catalyses D-ribulose 1,5-bisphosphate + O2 = 2-phosphoglycolate + (2R)-3-phosphoglycerate + 2 H(+). RuBisCO catalyzes two reactions: the carboxylation of D-ribulose 1,5-bisphosphate, the primary event in carbon dioxide fixation, as well as the oxidative fragmentation of the pentose substrate in the photorespiration process. Both reactions occur simultaneously and in competition at the same active site. The protein is Ribulose bisphosphate carboxylase large chain of Ligustrum vulgare (Common privet).